The chain runs to 428 residues: Elongation factor 1-alpha (428 aa).

One can recognise a tr-type G domain in the interval 5 to 217 (KPHVNIVFIG…DQIPEPEKPV (213 aa)). The interval 14 to 21 (GHVDHGKS) is G1. 14–21 (GHVDHGKS) contributes to the GTP binding site. Residue Ser21 participates in Mg(2+) binding. The interval 68–72 (GITID) is G2. Positions 89–92 (DAPG) are G3. Residues 89–93 (DAPGH) and 144–147 (NKMD) each bind GTP. The interval 144–147 (NKMD) is G4. The segment at 181–183 (SAW) is G5.

This sequence belongs to the TRAFAC class translation factor GTPase superfamily. Classic translation factor GTPase family. EF-Tu/EF-1A subfamily.

It localises to the cytoplasm. The enzyme catalyses GTP + H2O = GDP + phosphate + H(+). In terms of biological role, GTP hydrolase that promotes the GTP-dependent binding of aminoacyl-tRNA to the A-site of ribosomes during protein biosynthesis. The chain is Elongation factor 1-alpha from Pyrococcus furiosus (strain ATCC 43587 / DSM 3638 / JCM 8422 / Vc1).